The primary structure comprises 322 residues: ATP-dependent 6-phosphofructokinase (322 aa).

ATP-binding positions include Gly-12, 73-74, and 103-106; these read RF and GDGT. Mg(2+) is bound at residue Asp-104. 126–128 contacts substrate; that stretch reads TID. Asp-128 acts as the Proton acceptor in catalysis. An ADP-binding site is contributed by Arg-155. Residues Arg-163 and 170–172 each bind substrate; that span reads MGR. ADP is bound by residues 186–188, Lys-212, and 214–216; these read GSE and KPS. Substrate contacts are provided by residues Glu-223, Arg-245, and 251–254; that span reads HTQR.

The protein belongs to the phosphofructokinase type A (PFKA) family. ATP-dependent PFK group I subfamily. Prokaryotic clade 'B1' sub-subfamily. Homotetramer. Mg(2+) is required as a cofactor.

It localises to the cytoplasm. It catalyses the reaction beta-D-fructose 6-phosphate + ATP = beta-D-fructose 1,6-bisphosphate + ADP + H(+). Its pathway is carbohydrate degradation; glycolysis; D-glyceraldehyde 3-phosphate and glycerone phosphate from D-glucose: step 3/4. With respect to regulation, allosterically activated by ADP and other diphosphonucleosides, and allosterically inhibited by phosphoenolpyruvate. Catalyzes the phosphorylation of D-fructose 6-phosphate to fructose 1,6-bisphosphate by ATP, the first committing step of glycolysis. The chain is ATP-dependent 6-phosphofructokinase from Mesomycoplasma hyopneumoniae (strain 232) (Mycoplasma hyopneumoniae).